The primary structure comprises 103 residues: KRLLEDLGIKINEIIPEGASVKNLINLPKAWFNIVPYREVGLMTASFLQKDFGMPYILTTPMGIIDTADFIRQVQKNVNKLAPFFLNKTFDYESYIDYQTKFV.

The protein belongs to the ChlB/BchB/BchZ family. In terms of assembly, protochlorophyllide reductase is composed of three subunits; ChlL, ChlN and ChlB. Forms a heterotetramer of two ChlB and two ChlN subunits. The cofactor is [4Fe-4S] cluster.

Its subcellular location is the plastid. The protein localises to the chloroplast. It catalyses the reaction chlorophyllide a + oxidized 2[4Fe-4S]-[ferredoxin] + 2 ADP + 2 phosphate = protochlorophyllide a + reduced 2[4Fe-4S]-[ferredoxin] + 2 ATP + 2 H2O. The protein operates within porphyrin-containing compound metabolism; chlorophyll biosynthesis (light-independent). Its function is as follows. Component of the dark-operative protochlorophyllide reductase (DPOR) that uses Mg-ATP and reduced ferredoxin to reduce ring D of protochlorophyllide (Pchlide) to form chlorophyllide a (Chlide). This reaction is light-independent. The NB-protein (ChlN-ChlB) is the catalytic component of the complex. The polypeptide is Light-independent protochlorophyllide reductase subunit B (chlB) (Equisetum arvense (Field horsetail)).